Here is a 195-residue protein sequence, read N- to C-terminus: dTTP/UTP pyrophosphatase (195 aa).

D70 (proton acceptor) is an active-site residue.

Belongs to the Maf family. YhdE subfamily. A divalent metal cation is required as a cofactor.

The protein resides in the cytoplasm. It carries out the reaction dTTP + H2O = dTMP + diphosphate + H(+). The enzyme catalyses UTP + H2O = UMP + diphosphate + H(+). In terms of biological role, nucleoside triphosphate pyrophosphatase that hydrolyzes dTTP and UTP. May have a dual role in cell division arrest and in preventing the incorporation of modified nucleotides into cellular nucleic acids. In Photorhabdus laumondii subsp. laumondii (strain DSM 15139 / CIP 105565 / TT01) (Photorhabdus luminescens subsp. laumondii), this protein is dTTP/UTP pyrophosphatase.